A 519-amino-acid polypeptide reads, in one-letter code: Asteroid homolog 1 (519 aa).

Belongs to the asteroid family.

The protein localises to the cytoplasm. Its subcellular location is the mitochondrion. The chain is Asteroid homolog 1 (ast1) from Schizosaccharomyces pombe (strain 972 / ATCC 24843) (Fission yeast).